We begin with the raw amino-acid sequence, 213 residues long: ATP phosphoribosyltransferase (213 aa).

This sequence belongs to the ATP phosphoribosyltransferase family. Short subfamily. Heteromultimer composed of HisG and HisZ subunits.

It localises to the cytoplasm. The catalysed reaction is 1-(5-phospho-beta-D-ribosyl)-ATP + diphosphate = 5-phospho-alpha-D-ribose 1-diphosphate + ATP. It participates in amino-acid biosynthesis; L-histidine biosynthesis; L-histidine from 5-phospho-alpha-D-ribose 1-diphosphate: step 1/9. In terms of biological role, catalyzes the condensation of ATP and 5-phosphoribose 1-diphosphate to form N'-(5'-phosphoribosyl)-ATP (PR-ATP). Has a crucial role in the pathway because the rate of histidine biosynthesis seems to be controlled primarily by regulation of HisG enzymatic activity. This is ATP phosphoribosyltransferase from Methylococcus capsulatus (strain ATCC 33009 / NCIMB 11132 / Bath).